Consider the following 381-residue polypeptide: Opsin-1 (381 aa).

The Extracellular segment spans residues 1 to 53 (MASASLISEPSFSAYWGGSGGFANQTVVDKVPPEMLYLVDPHWYQFPPMNPLW). Asn-24 is a glycosylation site (N-linked (GlcNAc...) asparagine). The chain crosses the membrane as a helical span at residues 54 to 78 (HGLLGFVIGVLGVISVIGNGMVIYI). Residues 79-90 (FSTTKSLRTPSN) lie on the Cytoplasmic side of the membrane. A helical transmembrane segment spans residues 91 to 115 (LLVVNLAFSDFLMMFTMSAPMGINC). At 116 to 130 (YYETWVLGPFMCELY) the chain is on the extracellular side. Residues Cys-127 and Cys-204 are joined by a disulfide bond. Residues 131-150 (ALFGSLFGCGSIWTMTMIAL) traverse the membrane as a helical segment. The Cytoplasmic portion of the chain corresponds to 151 to 169 (DRYNVIVKGLSAKPMTNKT). The chain crosses the membrane as a helical span at residues 170–193 (AMLRILFIWAFSVAWTIMPLFGWN). Residues 194–217 (RYVPEGNMTACGTDYLTKDWVSRS) are Extracellular-facing. The N-linked (GlcNAc...) asparagine glycan is linked to Asn-200. The chain crosses the membrane as a helical span at residues 218 to 245 (YILVYSFFVYLLPLGTIIYSYFFILQAV). Topologically, residues 246 to 280 (SAHEKQMREQRKKMNVASLRSAEASQTSAECKLAK) are cytoplasmic. Residues 281–304 (VALMTISLWFFGWTPYLIINFTGI) form a helical membrane-spanning segment. Over 305-311 (FETMKIS) the chain is Extracellular. The helical transmembrane segment at 312-336 (PLLTIWGSLFAKANAVFNPIVYGIS) threads the bilayer. N6-(retinylidene)lysine is present on Lys-323. Residues 337-381 (HPKYRAALEKKFPSLACASSSDDNTSVASGATTVSDEKSEKSASA) lie on the Cytoplasmic side of the membrane. The segment covering 354-370 (ASSSDDNTSVASGATTV) has biased composition (polar residues). The segment at 354–381 (ASSSDDNTSVASGATTVSDEKSEKSASA) is disordered. Basic and acidic residues predominate over residues 371-381 (SDEKSEKSASA).

The protein belongs to the G-protein coupled receptor 1 family. Opsin subfamily. Post-translationally, phosphorylated on some or all of the serine and threonine residues present in the C-terminal region.

The protein resides in the cell projection. It is found in the rhabdomere membrane. Visual pigments are the light-absorbing molecules that mediate vision. They consist of an apoprotein, opsin, covalently linked to cis-retinal. In Schistocerca gregaria (Desert locust), this protein is Opsin-1 (Lo1).